Here is a 444-residue protein sequence, read N- to C-terminus: uncharacterized protein (444 aa).

In terms of domain architecture, Radical SAM core spans 164-381 (GAYGKSFLLE…EKALKKEGIR (218 aa)). Cys178, Cys182, and Cys185 together coordinate [4Fe-4S] cluster.

Requires [4Fe-4S] cluster as cofactor.

This is an uncharacterized protein from Methanocaldococcus jannaschii (strain ATCC 43067 / DSM 2661 / JAL-1 / JCM 10045 / NBRC 100440) (Methanococcus jannaschii).